We begin with the raw amino-acid sequence, 121 residues long: NAD(P)H-quinone oxidoreductase subunit 3, chloroplastic (121 aa).

The next 3 helical transmembrane spans lie at Phe10–Leu30, Met65–Met85, and Leu90–Ile110.

This sequence belongs to the complex I subunit 3 family. NDH is composed of at least 16 different subunits, 5 of which are encoded in the nucleus.

It localises to the plastid. The protein localises to the chloroplast thylakoid membrane. It carries out the reaction a plastoquinone + NADH + (n+1) H(+)(in) = a plastoquinol + NAD(+) + n H(+)(out). The catalysed reaction is a plastoquinone + NADPH + (n+1) H(+)(in) = a plastoquinol + NADP(+) + n H(+)(out). Functionally, NDH shuttles electrons from NAD(P)H:plastoquinone, via FMN and iron-sulfur (Fe-S) centers, to quinones in the photosynthetic chain and possibly in a chloroplast respiratory chain. The immediate electron acceptor for the enzyme in this species is believed to be plastoquinone. Couples the redox reaction to proton translocation, and thus conserves the redox energy in a proton gradient. The chain is NAD(P)H-quinone oxidoreductase subunit 3, chloroplastic from Staurastrum punctulatum (Green alga).